The following is a 123-amino-acid chain: Secreted LysM effector Lys1 (123 aa).

The N-terminal stretch at 1–20 (MMGLAKTLLLASQLTAVVVA) is a signal peptide. The 47-residue stretch at 72–118 (KFCWVQAGNKCYQVAMENHISLADFLKWNPGAGSDCRTLWANTYACV) folds into the LysM domain.

This sequence belongs to the secreted LysM effector family.

Might have a role in sequestration of chitin oligosaccharides (breakdown products of fungal cell walls that are released during invasion and act as triggers of host immunity) to dampen host defense. The protein is Secreted LysM effector Lys1 of Pochonia chlamydosporia (strain 123) (Metacordyceps chlamydosporia).